A 347-amino-acid polypeptide reads, in one-letter code: Leucine-rich repeat-containing protein 69 (347 aa).

LRR repeat units lie at residues 15–37 (NTKILTLNGKRITKMPSTLEKLP), 38–60 (NLKTLDLQNNSISKVCPELRTLT), 61–82 (QLTLLNLGNNHLQEVPEEIKYL), 84–105 (SLKNLHLFGNRICRIAPGVFNG), 108–129 (RLIMLNLNDNRLTSLPQEIGRL), 131–152 (SLTYLSLNRNNLTVIPKELCSL), 154–175 (HLSELHLNYNQIVYIPEEIKFL), 177–198 (NLQQLFLVRNNIEELPEEICHL), and 200–222 (KLRVLDIAGNVIQIFPAGFQNLR).

Belongs to the LRRC69 family.

The chain is Leucine-rich repeat-containing protein 69 (Lrrc69) from Mus musculus (Mouse).